Reading from the N-terminus, the 253-residue chain is Uracil-DNA glycosylase (253 aa).

Catalysis depends on aspartate 79, which acts as the Proton acceptor.

Belongs to the uracil-DNA glycosylase (UDG) superfamily. UNG family.

The protein resides in the cytoplasm. The catalysed reaction is Hydrolyzes single-stranded DNA or mismatched double-stranded DNA and polynucleotides, releasing free uracil.. Excises uracil residues from the DNA which can arise as a result of misincorporation of dUMP residues by DNA polymerase or due to deamination of cytosine. The protein is Uracil-DNA glycosylase of Xylella fastidiosa (strain M23).